Here is a 108-residue protein sequence, read N- to C-terminus: Large ribosomal subunit protein P1B (108 aa).

Residues 72-84 show a composition bias toward low complexity; the sequence is AGSASGAAAGGEA. The segment at 72-108 is disordered; it reads AGSASGAAAGGEAAAEEAAEEEAAEESDDDMGFGLFD. Over residues 85 to 102 the composition is skewed to acidic residues; the sequence is AAEEAAEEEAAEESDDDM.

This sequence belongs to the eukaryotic ribosomal protein P1/P2 family. P1 and P2 exist as dimers at the large ribosomal subunit. Phosphorylated.

Its function is as follows. Plays an important role in the elongation step of protein synthesis. The polypeptide is Large ribosomal subunit protein P1B (RPP1B) (Candida albicans (Yeast)).